The primary structure comprises 207 residues: A disintegrin and metalloproteinase with thrombospondin motifs 5 (207 aa).

The 74-residue stretch at 1 to 74 (HAAFTVAHEI…GHGNCLLDLP (74 aa)) folds into the Peptidase M12B domain. Histidine 8 is a Zn(2+) binding site. The active site involves glutamate 9. The Zn(2+) site is built by histidine 12 and histidine 18. 5 cysteine pairs are disulfide-bonded: cysteine 24-cysteine 53, cysteine 95-cysteine 117, cysteine 106-cysteine 127, cysteine 112-cysteine 146, and cysteine 140-cysteine 151. Residues 83-164 (ELPGQTYDAS…TKKKYYSTSS (82 aa)) form the Disintegrin domain. The N-linked (GlcNAc...) asparagine glycan is linked to asparagine 96. Residues 165-205 (HGNWGSWGSWGQCSRSCGGGVQFAYRHCNNPAPKNNGRYCT) form the TSP type-1 domain. C-linked (Man) tryptophan glycosylation is found at tryptophan 168 and tryptophan 171. Serine 180 carries an O-linked (Fuc...) serine glycan.

Zn(2+) is required as a cofactor. The precursor is cleaved by furin and PCSK7 outside of the cell. Post-translationally, glycosylated. Can be O-fucosylated by POFUT2 on a serine or a threonine residue found within the consensus sequence C1-X(2)-(S/T)-C2-G of the TSP type-1 repeat domains where C1 and C2 are the first and second cysteine residue of the repeat, respectively. Fucosylated repeats can then be further glycosylated by the addition of a beta-1,3-glucose residue by the glucosyltransferase, B3GALTL. Fucosylation mediates the efficient secretion of ADAMTS family members. Can also be C-glycosylated with one or two mannose molecules on tryptophan residues within the consensus sequence W-X-X-W of the TPRs, and N-glycosylated. These other glycosylations can also facilitate secretion.

It localises to the secreted. It is found in the extracellular space. The protein resides in the extracellular matrix. Functionally, metalloproteinase that plays an important role in connective tissue organization, development, inflammation and cell migration. Extracellular matrix (ECM) degrading enzyme that shows proteolytic activity toward the hyalectan group of chondroitin sulfate proteoglycans (CSPGs) including ACAN, VCAN, BCAN and NCAN. Cleavage within the hyalectans occurs at Glu-Xaa recognition motifs. Plays a role in embryonic development, including limb and cardiac morphogenesis, and skeletal muscle development through its VCAN remodeling properties. Cleaves VCAN in the pericellular matrix surrounding myoblasts, facilitating myoblast contact and fusion which is required for skeletal muscle development and regeneration. Participates in the development of brown adipose tissue and browning of white adipose tissue. Plays an important role for T-lymphocyte migration from draining lymph nodes following viral infection. The sequence is that of A disintegrin and metalloproteinase with thrombospondin motifs 5 (ADAMTS5) from Bos taurus (Bovine).